We begin with the raw amino-acid sequence, 278 residues long: Gap junction delta-3 protein (278 aa).

Over 1 to 24 the chain is Cytoplasmic; it reads MGEWAFLGSLLDAVQLQSPLVGRL. A helical transmembrane segment spans residues 25 to 45; that stretch reads WLVIMLIFRILVLATVGGAVF. Over 46–76 the chain is Extracellular; it reads EDEQEEFVCNTLQPGCRQTCYDRAFPVSHYR. Residues 77–97 form a helical membrane-spanning segment; the sequence is FWLFHILLLSAPPVLFVIYSM. Over 98-136 the chain is Cytoplasmic; sequence HQASKEAGGAQLAPPCARGRAEAPCSPCALRARRARRCY. The helical transmembrane segment at 137 to 157 threads the bilayer; sequence LLSVALRLLAELAFLGGQALL. The Extracellular segment spans residues 158-188; that stretch reads YGFRVDPHYACAGPPCPHTVDCFVSRPTEKT. The helical transmembrane segment at 189–209 threads the bilayer; that stretch reads VFVVFYFAVGLLSALLSVAEL. At 210 to 278 the chain is on the cytoplasmic side; it reads GHLLWKGRQR…LATVRQDLAI (69 aa). The tract at residues 223-278 is disordered; it reads LPPPPPSPSLPSQRGDPDPFGPPAYAHRSPAGDSEGEGGSGHSKASLATVRQDLAI.

This sequence belongs to the connexin family. Delta-type subfamily. A connexon is composed of a hexamer of connexins.

The protein localises to the cell membrane. The protein resides in the cell junction. It is found in the gap junction. One gap junction consists of a cluster of closely packed pairs of transmembrane channels, the connexons, through which materials of low MW diffuse from one cell to a neighboring cell. This is Gap junction delta-3 protein (Gjd3) from Mus musculus (Mouse).